Here is a 345-residue protein sequence, read N- to C-terminus: WD40 repeat protein poxJ (345 aa).

4 WD repeats span residues 15 to 49 (ANPP…YDVS), 59 to 100 (LFNF…EAQQ), 101 to 146 (VAAH…PLAT), and 250 to 284 (VNDV…RLKS).

This sequence belongs to the WD repeat rae1 family.

The protein operates within secondary metabolite biosynthesis. Functionally, WD40 repeat protein; part of the gene cluster that mediates the biosynthesis of oxaleimides, cytotoxic compounds containing an unusual disubstituted succinimide moiety. The first step of the pathway is provided by the HR-PKS poxF that serves in a new mode of collaborative biosynthesis with the PKS-NRPS poxE, by providing the olefin containing amino acid substrate via the synthesis of an ACP-bound dec-4-enoate. The cytochrome P450 monooxygenase poxM-catalyzed oxidation at the alpha-position creates the enzyme-bound 2-hydroxydec-4-enoyl-ACP thioester, which may be prone to spontaneous hydrolysis to yield 2-hydroxydec-4-enoic acid due to increased electrophilicity of the carbonyl. 2-hydroxydec-4-enoic acid can then be further oxidized by poxM to yield the alpha-ketoacid 2-oxodec-4-enoicacid, which is reductively aminated by the aminotransferase poxL to yield (S,E)-2-aminodec-4-enoic acid. The Hybrid PKS-NRPS synthetase poxE then performs condensation between the octaketide product of its PKS modules and the amino group of (S,E)-2-aminodec-4-enoic acid which is activated and incorporated by the adenylation domain. The resulting aminoacyl product can be cyclized by the Diels-Alderase PoxQ and reductively released by the reductive (R) domain of poxE to yield an aldehyde intermediate. The released aldehyde is then substrate for a Knoevenagel condensation by the hydrolyase poxO followed by an oxidation at the 5-position of the pyrrolidone ring. The presence of the olefin from the amino acid building block allows for migration of the substituted allyl group to occur. This allylic transposition reaction takes place in a conjugate addition, semipinacol-like fashion to yield a succinimide intermediate. Iterative two-electron oxidations of the C7 methyl of the succinimide intermediate to the carboxylic acid can be catalyzed by one of two remaining cytochrome P450 monooxygenasess poxC or poxD to yield oxaleimide A. Subsequent oxidation yields the maleimide scaffold oxaleimide I. Both oxaleimide A and oxaleimide I can undergo oxidative modifications in the decalin ring to yield the series of products oxaleimides B to H. The protein is WD40 repeat protein poxJ of Penicillium oxalicum (strain 114-2 / CGMCC 5302) (Penicillium decumbens).